The chain runs to 704 residues: Polyribonucleotide nucleotidyltransferase 4 (704 aa).

Positions 483 and 489 each coordinate Mg(2+). In terms of domain architecture, KH spans 550 to 609 (PRVLKMKIHPDKIRDVIGSGGKTINRIIDETGVKIDIDNDGTIFIAAESQEAVEKAIIII). Residues 619-687 (GQNYTGKVIK…QQGKINLSRK (69 aa)) form the S1 motif domain.

This sequence belongs to the polyribonucleotide nucleotidyltransferase family. Mg(2+) is required as a cofactor.

It is found in the cytoplasm. It carries out the reaction RNA(n+1) + phosphate = RNA(n) + a ribonucleoside 5'-diphosphate. Its function is as follows. Involved in mRNA degradation. Catalyzes the phosphorolysis of single-stranded polyribonucleotides processively in the 3'- to 5'-direction. In Alkaliphilus metalliredigens (strain QYMF), this protein is Polyribonucleotide nucleotidyltransferase 4.